We begin with the raw amino-acid sequence, 318 residues long: Protein W (318 aa).

Disordered regions lie at residues 1-23 (MDQD…GGRE) and 38-318 (SEPT…KKGA). The span at 7 to 20 (ILKEDSEVEREAPG) shows a compositional bias: basic and acidic residues. Polar residues predominate over residues 50–59 (LHNTINTPQG). Serine 68 bears the Phosphoserine; by host mark. The span at 83–101 (RSGEESRVSGRTSKPEAEA) shows a compositional bias: basic and acidic residues. Position 125 is a phosphoserine; by host (serine 125). Residues 150-168 (GIEDENREMAAHPDKRGED) show a composition bias toward basic and acidic residues. The segment covering 191 to 206 (ASNNGRSMEPGSSHSA) has biased composition (polar residues). Phosphoserine; by host occurs at positions 192, 249, 257, and 260.

The chain is Protein W (P/V/C) from Sendai virus (strain Harris) (SeV).